A 295-amino-acid chain; its full sequence is MSNLKDIKRKIKSVQNTQKTTKAMKLVSTAKLKKAEEAARHSRVYALKINEVLSEIAYKINQFKIVGKDDKFFDLKASINKVDIIFVTADKGLCGGFNISTIKTIRNMIEEYKSKKIKVRLRAVGKKGIEFFNFQGVEILESYKGISSAPTYDKAKGVIASAISDFVAGATDKVILVHNGYKNMISQEIRINTIVPVETPSIENVEHSSSLMEIEPENDEKILEELMKKYFEYSMYYALIDSLAAEHSARMQAMDNATNNAKARVKELQLAYNKARQESITTELIEIISGVESMK.

It belongs to the ATPase gamma chain family. In terms of assembly, F-type ATPases have 2 components, CF(1) - the catalytic core - and CF(0) - the membrane proton channel. CF(1) has five subunits: alpha(3), beta(3), gamma(1), delta(1), epsilon(1). CF(0) has three main subunits: a, b and c.

It localises to the cell inner membrane. Its function is as follows. Produces ATP from ADP in the presence of a proton gradient across the membrane. The gamma chain is believed to be important in regulating ATPase activity and the flow of protons through the CF(0) complex. In Campylobacter fetus subsp. fetus (strain 82-40), this protein is ATP synthase gamma chain.